The primary structure comprises 354 residues: Protein Wnt-11 (354 aa).

The signal sequence occupies residues 1–23 (MTEYRNFLLLFITSLSVIYPCTG). Asn32, Asn39, and Asn89 each carry an N-linked (GlcNAc...) asparagine glycan. Cystine bridges form between Cys129/Cys137, Cys139/Cys156, Cys209/Cys223, Cys211/Cys218, Cys283/Cys314, Cys299/Cys309, Cys329/Cys344, Cys331/Cys341, and Cys336/Cys337. The O-palmitoleoyl serine; by PORCN moiety is linked to residue Ser215. The N-linked (GlcNAc...) asparagine glycan is linked to Asn300.

It belongs to the Wnt family. Palmitoleoylation is required for efficient binding to frizzled receptors. Depalmitoleoylation leads to Wnt signaling pathway inhibition.

The protein localises to the secreted. It is found in the extracellular space. Its subcellular location is the extracellular matrix. Its function is as follows. Ligand for fzd5, a member of the G-protein coupled frizzled receptor family. Plays a role in early eye development, possibly through wnt non-canonical signaling. Promotes eye formation, at least partially, by antagonizing the Wnt/beta-catenin pathway. In addition, promotes coherence of eye field cells, potentially contributing to the coordinated morphogenetic behaviors of cells in the nascent eye field. The protein is Protein Wnt-11 (wnt11) of Danio rerio (Zebrafish).